A 269-amino-acid polypeptide reads, in one-letter code: Major pollen allergen Pha a 1 (269 aa).

The first 29 residues, 1–29 (MMKMVCSSSSSSLLVVAALLAVFVGSAQG), serve as a signal peptide directing secretion. Asn38 is a glycosylation site (N-linked (GlcNAc...) asparagine). In terms of domain architecture, Expansin-like EG45 spans 67 to 173 (GGACGYKDVD…RRVKCKYPDG (107 aa)). The 82-residue stretch at 187 to 268 (NYLALLVKYV…GWKADTHDAS (82 aa)) folds into the Expansin-like CBD domain.

The protein belongs to the expansin family. Expansin B subfamily.

The protein resides in the secreted. This chain is Major pollen allergen Pha a 1, found in Phalaris aquatica (Canary grass).